Here is a 270-residue protein sequence, read N- to C-terminus: tRNA (guanine-N(1)-)-methyltransferase (270 aa).

Residues Gly113 and 133-138 (IGDYVL) contribute to the S-adenosyl-L-methionine site. A disordered region spans residues 251–270 (APTEGTGLIHHRDVEGPGEG). Residues 260 to 270 (HHRDVEGPGEG) are compositionally biased toward basic and acidic residues.

It belongs to the RNA methyltransferase TrmD family. As to quaternary structure, homodimer.

It is found in the cytoplasm. It carries out the reaction guanosine(37) in tRNA + S-adenosyl-L-methionine = N(1)-methylguanosine(37) in tRNA + S-adenosyl-L-homocysteine + H(+). Its function is as follows. Specifically methylates guanosine-37 in various tRNAs. The chain is tRNA (guanine-N(1)-)-methyltransferase from Frankia casuarinae (strain DSM 45818 / CECT 9043 / HFP020203 / CcI3).